Consider the following 360-residue polypeptide: Phospho-N-acetylmuramoyl-pentapeptide-transferase (360 aa).

Transmembrane regions (helical) follow at residues 26–46 (AILG…WVIN), 70–90 (GTPT…TLLW), 97–117 (YVLA…VDDY), 134–154 (YFWQ…TAQI), 167–187 (GVAL…VVGF), 199–219 (GLAI…AYLV), 236–256 (AGEL…FLWF), 263–283 (VFMG…IAVI), 288–308 (IVFI…ILQV), and 338–358 (VIVR…ATLK).

The protein belongs to the glycosyltransferase 4 family. MraY subfamily. Requires Mg(2+) as cofactor.

It is found in the cell inner membrane. The catalysed reaction is UDP-N-acetyl-alpha-D-muramoyl-L-alanyl-gamma-D-glutamyl-meso-2,6-diaminopimeloyl-D-alanyl-D-alanine + di-trans,octa-cis-undecaprenyl phosphate = di-trans,octa-cis-undecaprenyl diphospho-N-acetyl-alpha-D-muramoyl-L-alanyl-D-glutamyl-meso-2,6-diaminopimeloyl-D-alanyl-D-alanine + UMP. It functions in the pathway cell wall biogenesis; peptidoglycan biosynthesis. Catalyzes the initial step of the lipid cycle reactions in the biosynthesis of the cell wall peptidoglycan: transfers peptidoglycan precursor phospho-MurNAc-pentapeptide from UDP-MurNAc-pentapeptide onto the lipid carrier undecaprenyl phosphate, yielding undecaprenyl-pyrophosphoryl-MurNAc-pentapeptide, known as lipid I. The polypeptide is Phospho-N-acetylmuramoyl-pentapeptide-transferase (Saccharophagus degradans (strain 2-40 / ATCC 43961 / DSM 17024)).